The sequence spans 134 residues: Shikimate kinase (134 aa).

Belongs to the shikimate kinase family.

It localises to the cytoplasm. The catalysed reaction is shikimate + ATP = 3-phosphoshikimate + ADP + H(+). It participates in metabolic intermediate biosynthesis; chorismate biosynthesis; chorismate from D-erythrose 4-phosphate and phosphoenolpyruvate: step 5/7. The protein is Shikimate kinase (aroK) of Neisseria gonorrhoeae.